The primary structure comprises 614 residues: UvrABC system protein C (614 aa).

The GIY-YIG domain occupies 16-94 (SRPGVYRMFG…VKSLKPRFNV (79 aa)). The UVR domain maps to 204–239 (GELQKRLASEMEAASEAMEFETAARLRDRIRAIAHV).

This sequence belongs to the UvrC family. Interacts with UvrB in an incision complex.

It is found in the cytoplasm. The UvrABC repair system catalyzes the recognition and processing of DNA lesions. UvrC both incises the 5' and 3' sides of the lesion. The N-terminal half is responsible for the 3' incision and the C-terminal half is responsible for the 5' incision. This is UvrABC system protein C from Hyphomonas neptunium (strain ATCC 15444).